Consider the following 155-residue polypeptide: Transcriptional repressor NrdR (155 aa).

Residues 3–34 fold into a zinc finger; that stretch reads CPFCNQTDTKVIDSRLVADGVQVRRRRECQAC. One can recognise an ATP-cone domain in the interval 49-139; sequence PKVIKQDGTR…VYRSFQDISE (91 aa).

This sequence belongs to the NrdR family. Zn(2+) is required as a cofactor.

Its function is as follows. Negatively regulates transcription of bacterial ribonucleotide reductase nrd genes and operons by binding to NrdR-boxes. The protein is Transcriptional repressor NrdR of Teredinibacter turnerae (strain ATCC 39867 / T7901).